The chain runs to 492 residues: ATP synthase subunit beta, chloroplastic (492 aa).

Position 170-177 (170-177 (GGAGVGKT)) interacts with ATP.

The protein belongs to the ATPase alpha/beta chains family. F-type ATPases have 2 components, CF(1) - the catalytic core - and CF(0) - the membrane proton channel. CF(1) has five subunits: alpha(3), beta(3), gamma(1), delta(1), epsilon(1). CF(0) has four main subunits: a(1), b(1), b'(1) and c(9-12).

Its subcellular location is the plastid. It localises to the chloroplast thylakoid membrane. It catalyses the reaction ATP + H2O + 4 H(+)(in) = ADP + phosphate + 5 H(+)(out). Its function is as follows. Produces ATP from ADP in the presence of a proton gradient across the membrane. The catalytic sites are hosted primarily by the beta subunits. The chain is ATP synthase subunit beta, chloroplastic from Anthoceros angustus (Hornwort).